The following is a 199-amino-acid chain: Recombination protein RecR (199 aa).

The segment at 57–72 (CSICGNITDKDPCYVC) adopts a C4-type zinc-finger fold. The 97-residue stretch at 80–176 (TIVCVVQDSR…RVTRIAHGLP (97 aa)) folds into the Toprim domain.

The protein belongs to the RecR family.

May play a role in DNA repair. It seems to be involved in an RecBC-independent recombinational process of DNA repair. It may act with RecF and RecO. The sequence is that of Recombination protein RecR from Exiguobacterium sibiricum (strain DSM 17290 / CCUG 55495 / CIP 109462 / JCM 13490 / 255-15).